We begin with the raw amino-acid sequence, 346 residues long: Phosphoribosylformylglycinamidine cyclo-ligase (346 aa).

It belongs to the AIR synthase family.

Its subcellular location is the cytoplasm. The catalysed reaction is 2-formamido-N(1)-(5-O-phospho-beta-D-ribosyl)acetamidine + ATP = 5-amino-1-(5-phospho-beta-D-ribosyl)imidazole + ADP + phosphate + H(+). The protein operates within purine metabolism; IMP biosynthesis via de novo pathway; 5-amino-1-(5-phospho-D-ribosyl)imidazole from N(2)-formyl-N(1)-(5-phospho-D-ribosyl)glycinamide: step 2/2. The protein is Phosphoribosylformylglycinamidine cyclo-ligase of Methylobacillus flagellatus (strain ATCC 51484 / DSM 6875 / VKM B-1610 / KT).